The chain runs to 58 residues: Attractin (58 aa).

3 disulfides stabilise this stretch: Cys-4–Cys-41, Cys-13–Cys-33, and Cys-20–Cys-26. Asn-8 carries N-linked (GlcNAc...) asparagine glycosylation.

As to expression, produced by the albumen gland of the egg cordons.

The protein resides in the secreted. In terms of biological role, water-borne pheromone that attract the marine mollusk Aplysia into breeding aggregations and coordinate male and female reproductive behavior within the aggregation. The protein is Attractin (ATT) of Aplysia fasciata (Mottled sea hare).